The following is a 384-amino-acid chain: Methyl-CpG-binding domain-containing protein 10 (384 aa).

The region spanning 4–74 (TDELVSIELP…SEFEWTTGET (71 aa)) is the MBD domain. The disordered stretch occupies residues 65–384 (SEFEWTTGET…QQGAAASVSC (320 aa)). Residues 80–91 (RISQKVKATTPT) are compositionally biased toward polar residues. A coiled-coil region spans residues 100–224 (KRRSSLTKKD…MEVDTSELEK (125 aa)). Basic and acidic residues-rich tracts occupy residues 106–227 (TKKD…KKAG), 234–250 (EPSK…KEAQ), and 257–269 (DVEK…KTEN). Polar residues predominate over residues 270–284 (KGSVTTEANGEQNVT). Basic and acidic residues predominate over residues 295-365 (EADKGKESKE…NDMKAEDTNR (71 aa)). Residues 310 to 356 (TEAEANKENDTQESDEKKTEAAANKENETQESDVKKTEAAVAEEKSN) adopt a coiled-coil conformation. Phosphoserine is present on Ser-323. Low complexity predominate over residues 369–384 (ANQVQQQQGAAASVSC).

In terms of tissue distribution, expressed in leaves, buds, flowers, stems and siliques.

It localises to the nucleus. Its function is as follows. Probable transcriptional regulator. Required for nucleolar dominance that consist in the silencing of rRNA genes inherited from one progenitor in genetic hybrids. The protein is Methyl-CpG-binding domain-containing protein 10 (MBD10) of Arabidopsis thaliana (Mouse-ear cress).